Consider the following 165-residue polypeptide: Large ribosomal subunit protein uL10 (165 aa).

It belongs to the universal ribosomal protein uL10 family. In terms of assembly, part of the ribosomal stalk of the 50S ribosomal subunit. The N-terminus interacts with L11 and the large rRNA to form the base of the stalk. The C-terminus forms an elongated spine to which L12 dimers bind in a sequential fashion forming a multimeric L10(L12)X complex.

Forms part of the ribosomal stalk, playing a central role in the interaction of the ribosome with GTP-bound translation factors. The protein is Large ribosomal subunit protein uL10 of Burkholderia thailandensis (strain ATCC 700388 / DSM 13276 / CCUG 48851 / CIP 106301 / E264).